Consider the following 301-residue polypeptide: N-acetylmuramic acid 6-phosphate etherase (301 aa).

The SIS domain maps to 57–220 (TYEKMLFGGR…STSLMIKKGK (164 aa)). Catalysis depends on Glu-85, which acts as the Proton donor. The active site involves Glu-116.

Belongs to the GCKR-like family. MurNAc-6-P etherase subfamily. Homodimer.

It carries out the reaction N-acetyl-D-muramate 6-phosphate + H2O = N-acetyl-D-glucosamine 6-phosphate + (R)-lactate. It functions in the pathway amino-sugar metabolism; N-acetylmuramate degradation. Its function is as follows. Specifically catalyzes the cleavage of the D-lactyl ether substituent of MurNAc 6-phosphate, producing GlcNAc 6-phosphate and D-lactate. The protein is N-acetylmuramic acid 6-phosphate etherase of Clostridium botulinum (strain Eklund 17B / Type B).